We begin with the raw amino-acid sequence, 333 residues long: Tetraacyldisaccharide 4'-kinase (333 aa).

An ATP-binding site is contributed by 57-64; sequence IVGGAGKT.

Belongs to the LpxK family.

The catalysed reaction is a lipid A disaccharide + ATP = a lipid IVA + ADP + H(+). It participates in glycolipid biosynthesis; lipid IV(A) biosynthesis; lipid IV(A) from (3R)-3-hydroxytetradecanoyl-[acyl-carrier-protein] and UDP-N-acetyl-alpha-D-glucosamine: step 6/6. Functionally, transfers the gamma-phosphate of ATP to the 4'-position of a tetraacyldisaccharide 1-phosphate intermediate (termed DS-1-P) to form tetraacyldisaccharide 1,4'-bis-phosphate (lipid IVA). In Dechloromonas aromatica (strain RCB), this protein is Tetraacyldisaccharide 4'-kinase.